The sequence spans 152 residues: Transcriptional regulator MraZ (152 aa).

SpoVT-AbrB domains lie at 5–52 and 81–124; these read ASAI…PLKE and ATEC…SDAE.

The protein belongs to the MraZ family. As to quaternary structure, forms oligomers.

It localises to the cytoplasm. It is found in the nucleoid. This chain is Transcriptional regulator MraZ, found in Pasteurella multocida (strain Pm70).